The primary structure comprises 238 residues: ATP synthase subunit a (238 aa).

The next 5 helical transmembrane spans lie at 18-38 (LTLL…VFWA), 76-96 (YSLL…LGLF), 114-134 (NLAF…IEGV), 166-186 (SLAI…GLIV), and 193-213 (VYWW…SVFI).

Belongs to the ATPase A chain family. F-type ATPases have 2 components, CF(1) - the catalytic core - and CF(0) - the membrane proton channel. CF(1) has five subunits: alpha(3), beta(3), gamma(1), delta(1), epsilon(1). CF(0) has three main subunits: a(1), b(2) and c(9-12). The alpha and beta chains form an alternating ring which encloses part of the gamma chain. CF(1) is attached to CF(0) by a central stalk formed by the gamma and epsilon chains, while a peripheral stalk is formed by the delta and b chains.

The protein localises to the cell membrane. In terms of biological role, key component of the proton channel; it plays a direct role in the translocation of protons across the membrane. The chain is ATP synthase subunit a from Streptococcus pyogenes serotype M1.